Reading from the N-terminus, the 539-residue chain is GMP synthase [glutamine-hydrolyzing] (539 aa).

The region spanning 20-215 (TILILDFGSQ…AIEICHAKPN (196 aa)) is the Glutamine amidotransferase type-1 domain. The Nucleophile role is filled by cysteine 96. Catalysis depends on residues histidine 189 and glutamate 191. A GMPS ATP-PPase domain is found at 216-413 (WSMENFVDKE…LGIEHSLVWR (198 aa)). ATP is bound at residue 244-250 (SGGVDST). XMP is bound by residues arginine 317, aspartate 475, lysine 531, and glutamate 537.

In terms of assembly, homodimer. It depends on Mg(2+) as a cofactor.

The protein localises to the cytoplasm. Its subcellular location is the cytosol. The enzyme catalyses XMP + L-glutamine + ATP + H2O = GMP + L-glutamate + AMP + diphosphate + 2 H(+). It participates in purine metabolism; GMP biosynthesis; GMP from XMP (L-Gln route): step 1/1. Its function is as follows. Catalyzes the conversion of xanthine monophosphate (XMP) to GMP in the presence of glutamine and ATP through an adenyl-XMP intermediate. The chain is GMP synthase [glutamine-hydrolyzing] from Schizosaccharomyces pombe (strain 972 / ATCC 24843) (Fission yeast).